The sequence spans 459 residues: Glutamyl-tRNA(Gln) amidotransferase subunit A, mitochondrial (459 aa).

Catalysis depends on charge relay system residues Lys37 and Ser114. Ser138 (acyl-ester intermediate) is an active-site residue.

Belongs to the amidase family. GatA subfamily. In terms of assembly, subunit of the heterotrimeric GatFAB amidotransferase (AdT) complex, composed of A, B and F subunits.

The protein resides in the mitochondrion. It carries out the reaction L-glutamyl-tRNA(Gln) + L-glutamine + ATP + H2O = L-glutaminyl-tRNA(Gln) + L-glutamate + ADP + phosphate + H(+). Functionally, allows the formation of correctly charged Gln-tRNA(Gln) through the transamidation of misacylated Glu-tRNA(Gln) in the mitochondria. The reaction takes place in the presence of glutamine and ATP through an activated gamma-phospho-Glu-tRNA(Gln). The chain is Glutamyl-tRNA(Gln) amidotransferase subunit A, mitochondrial from Yarrowia lipolytica (strain CLIB 122 / E 150) (Yeast).